A 761-amino-acid polypeptide reads, in one-letter code: Phosphoribosylformylglycinamidine synthase subunit PurL (761 aa).

The active site involves histidine 48. Residues tyrosine 51 and lysine 90 each contribute to the ATP site. Glutamate 92 contacts Mg(2+). Residues 93-96 (SHNH) and arginine 115 contribute to the substrate site. Residue histidine 94 is the Proton acceptor of the active site. Aspartate 116 is a Mg(2+) binding site. Residue glutamine 239 coordinates substrate. Aspartate 267 contacts Mg(2+). 311-313 (ESQ) provides a ligand contact to substrate. ATP is bound by residues aspartate 499 and glycine 536. Position 537 (asparagine 537) interacts with Mg(2+). Serine 539 is a binding site for substrate.

This sequence belongs to the FGAMS family. As to quaternary structure, monomer. Part of the FGAM synthase complex composed of 1 PurL, 1 PurQ and 2 PurS subunits.

The protein resides in the cytoplasm. It carries out the reaction N(2)-formyl-N(1)-(5-phospho-beta-D-ribosyl)glycinamide + L-glutamine + ATP + H2O = 2-formamido-N(1)-(5-O-phospho-beta-D-ribosyl)acetamidine + L-glutamate + ADP + phosphate + H(+). It functions in the pathway purine metabolism; IMP biosynthesis via de novo pathway; 5-amino-1-(5-phospho-D-ribosyl)imidazole from N(2)-formyl-N(1)-(5-phospho-D-ribosyl)glycinamide: step 1/2. Part of the phosphoribosylformylglycinamidine synthase complex involved in the purines biosynthetic pathway. Catalyzes the ATP-dependent conversion of formylglycinamide ribonucleotide (FGAR) and glutamine to yield formylglycinamidine ribonucleotide (FGAM) and glutamate. The FGAM synthase complex is composed of three subunits. PurQ produces an ammonia molecule by converting glutamine to glutamate. PurL transfers the ammonia molecule to FGAR to form FGAM in an ATP-dependent manner. PurS interacts with PurQ and PurL and is thought to assist in the transfer of the ammonia molecule from PurQ to PurL. The chain is Phosphoribosylformylglycinamidine synthase subunit PurL from Thermosynechococcus vestitus (strain NIES-2133 / IAM M-273 / BP-1).